The sequence spans 116 residues: Spexin (116 aa).

Positions 1-26 (MKGLRSLAATTLALFLVFVFLGNSSC) are cleaved as a signal peptide. Residues 27–35 (APQRLLERR) constitute a propeptide that is removed on maturation. Residue Q49 is modified to Glutamine amide. Propeptides lie at residues 50–116 (GRRF…LLNW) and 74–116 (PNPQ…LLNW). A compositionally biased stretch (basic and acidic residues) spans 55–73 (SDQSRRKDLSDRPLPERRS). The disordered stretch occupies residues 55–77 (SDQSRRKDLSDRPLPERRSPNPQ).

Belongs to the spexin family. In terms of tissue distribution, expressed in the type I glomic cells within the carotid body (at protein level). Expressed predominantly in pancreas, testis, kidney, brain and placenta. Expressed in submucosal layer of esophagus and stomach fundus.

It localises to the secreted. The protein localises to the extracellular space. Its subcellular location is the cytoplasmic vesicle. It is found in the secretory vesicle. Functionally, plays a role as a central modulator of cardiovascular and renal function and nociception. Also plays a role in energy metabolism and storage. Inhibits adrenocortical cell proliferation with minor stimulation on corticosteroid release. Its function is as follows. Acts as a ligand for galanin receptors GALR2 and GALR3. Intracerebroventricular administration of the peptide induces an increase in arterial blood pressure, a decrease in both heart rate and renal excretion and delayed natriuresis. Intraventricular administration of the peptide induces antinociceptive activity. Also induces contraction of muscarinic-like stomach smooth muscles. Intraperitoneal administration of the peptide induces a reduction in food consumption and body weight. Inhibits long chain fatty acid uptake into adipocytes. In terms of biological role, intracerebroventricular administration of the peptide induces a decrease in heart rate, but no change in arterial pressure, and an increase in urine flow rate. Intraventricular administration of the peptide induces antinociceptive activity. In Homo sapiens (Human), this protein is Spexin (SPX).